Consider the following 151-residue polypeptide: Aspartate carbamoyltransferase regulatory chain (151 aa).

Residues C107, C112, C135, and C138 each coordinate Zn(2+).

Belongs to the PyrI family. Contains catalytic and regulatory chains. Requires Zn(2+) as cofactor.

Functionally, involved in allosteric regulation of aspartate carbamoyltransferase. The polypeptide is Aspartate carbamoyltransferase regulatory chain (Psychromonas ingrahamii (strain DSM 17664 / CCUG 51855 / 37)).